Consider the following 354-residue polypeptide: Probable cinnamyl alcohol dehydrogenase 1 (354 aa).

Zn(2+)-binding residues include Cys47, His69, Glu70, Cys100, Cys103, Cys106, Cys114, and Cys163. Residues Thr167, 188–193 (GLGGLG), 211–216 (STSESK), Thr251, and 297–299 (SVT) each bind NADP(+).

It belongs to the zinc-containing alcohol dehydrogenase family. As to quaternary structure, homodimer. Zn(2+) is required as a cofactor.

It catalyses the reaction (E)-cinnamyl alcohol + NADP(+) = (E)-cinnamaldehyde + NADPH + H(+). The enzyme catalyses (E)-coniferol + NADP(+) = (E)-coniferaldehyde + NADPH + H(+). The catalysed reaction is (E)-sinapyl alcohol + NADP(+) = (E)-sinapaldehyde + NADPH + H(+). It carries out the reaction (E)-4-coumaroyl alcohol + NADP(+) = (E)-4-coumaraldehyde + NADPH + H(+). It catalyses the reaction (E)-caffeyl alcohol + NADP(+) = (E)-caffeyl aldehyde + NADPH + H(+). It participates in aromatic compound metabolism; phenylpropanoid biosynthesis. In terms of biological role, involved in lignin biosynthesis. Catalyzes the final step specific for the production of lignin monomers. Catalyzes the NADPH-dependent reduction of coniferaldehyde, 5-hydroxyconiferaldehyde, sinapaldehyde, 4-coumaraldehyde and caffeyl aldehyde to their respective alcohols. In Oryza sativa subsp. japonica (Rice), this protein is Probable cinnamyl alcohol dehydrogenase 1.